The chain runs to 322 residues: DNA primase small subunit PriS (322 aa).

Active-site residues include aspartate 100, aspartate 102, and aspartate 228.

This sequence belongs to the eukaryotic-type primase small subunit family. As to quaternary structure, heterodimer of a small subunit (PriS) and a large subunit (PriL). The cofactor is Mg(2+). It depends on Mn(2+) as a cofactor.

Its function is as follows. Catalytic subunit of DNA primase, an RNA polymerase that catalyzes the synthesis of short RNA molecules used as primers for DNA polymerase during DNA replication. The small subunit contains the primase catalytic core and has DNA synthesis activity on its own. Binding to the large subunit stabilizes and modulates the activity, increasing the rate of DNA synthesis while decreasing the length of the DNA fragments, and conferring RNA synthesis capability. The DNA polymerase activity may enable DNA primase to also catalyze primer extension after primer synthesis. May also play a role in DNA repair. This Sulfolobus acidocaldarius (strain ATCC 33909 / DSM 639 / JCM 8929 / NBRC 15157 / NCIMB 11770) protein is DNA primase small subunit PriS.